A 420-amino-acid polypeptide reads, in one-letter code: Putative epoxide hydrolase (420 aa).

The protein belongs to the peptidase S33 family.

Its pathway is mycotoxin biosynthesis. Its function is as follows. Putative epoxide hydrolase; part of the fragmented gene cluster that mediates the biosynthesis of dothistromin (DOTH), a polyketide toxin very similar in structure to the aflatoxin precursor, versicolorin B. The first step of the pathway is the conversion of acetate to norsolorinic acid (NOR) and requires the fatty acid synthase subunits hexA and hexB, as well as the polyketide synthase pksA. PksA combines a hexanoyl starter unit and 7 malonyl-CoA extender units to synthesize the precursor NOR. The hexanoyl starter unit is provided to the acyl-carrier protein (ACP) domain by the fungal fatty acid synthase hexA/hexB. The second step is the conversion of NOR to averantin (AVN) and requires the norsolorinic acid ketoreductase nor1, which catalyzes the dehydration of norsolorinic acid to form (1'S)-averantin. The cytochrome P450 monooxygenase avnA then catalyzes the hydroxylation of AVN to 5'hydroxyaverantin (HAVN). The next step is performed by adhA that transforms HAVN to averufin (AVF). Averufin might then be converted to hydroxyversicolorone by cypX and avfA. Hydroxyversicolorone is further converted versiconal hemiacetal acetate (VHA) by moxY. VHA is then the substrate for the versiconal hemiacetal acetate esterase est1 to yield versiconal (VAL). Versicolorin B synthase vbsA then converts VAL to versicolorin B (VERB) by closing the bisfuran ring. Then, the activity of the versicolorin B desaturase verB leads to versicolorin A (VERA). DotB, a predicted chloroperoxidase, may perform epoxidation of the A-ring of VERA. Alternatively, a cytochrome P450, such as cypX or avnA could catalyze this step. It is also possible that another, uncharacterized, cytochrome P450 enzyme is responsible for this step. Opening of the epoxide could potentially be achieved by the epoxide hydrolase epoA. However, epoA seems not to be required for DOTH biosynthesis, but other epoxide hydrolases may have the ability to complement this hydrolysis. Alternatively, opening of the epoxide ring could be achieved non-enzymatically. The next step is the deoxygenation of ring A to yield the 5,8-dihydroxyanthraquinone which is most likely catalyzed by the NADPH dehydrogenase encoded by ver1. The last stages of DOTH biosynthesis are proposed to involve hydroxylation of the bisfuran. OrdB and norB might have oxidative roles here. An alternative possibility is that cytochrome P450 monoogenases such as avnA and cypX might perform these steps in addition to previously proposed steps. In Dothistroma septosporum (Red band needle blight fungus), this protein is Putative epoxide hydrolase.